Consider the following 139-residue polypeptide: MLAPKKLKHKKFRKVRFSDASARGSGLAFGEYGLKAIGSARLNGRQIESARRVITRIVSKAGKLWINVFPGIPLTRKPTDVRMGGGKGSVDSYIFAISPGRVLFELGGVDREKAKLALCKASAKLPFSTKFVERVSCEL.

It belongs to the universal ribosomal protein uL16 family. In terms of assembly, part of the 50S ribosomal subunit.

Binds 23S rRNA and is also seen to make contacts with the A and possibly P site tRNAs. This chain is Large ribosomal subunit protein uL16 (rplP), found in Neorickettsia sennetsu (strain ATCC VR-367 / Miyayama) (Ehrlichia sennetsu).